The sequence spans 317 residues: MSAQQTNLGIVVGVDGSPCSHTAVEWAARDAQMRNVALRVVQVVPPVITAPEGWAFEYSRFQEAQKREIVEHSYLVAQAHQIVEQAHKVALEASSSGRAAQITGEVLHGQIVPTLTNISRQVAMVVLGYRGQGAVAGALLGSVSSSLVRHAHGPVAVIPEEPRPARPPHAPVVVGIDGSPTSGLAAEIAFDEASRRGVDLVALHAWSDMGPLDFPRLNWAPIEWRNLEDEQEKMLARRLSGWQDRYPDVVVHKVVVCDRPAPRLLELAQTAQLVVVGSHGRGGFPGMHLGSVSRAVVNSGQAPVIVARIPQDPAVPA.

ATP contacts are provided by residues G13, 128-134 (GYRGQGA), 142-143 (SV), G175, D208, 277-283 (GSHGRGG), and 291-293 (SVS).

This sequence belongs to the universal stress protein A family.

In Mycobacterium tuberculosis (strain CDC 1551 / Oshkosh), this protein is Universal stress protein MT2052.